The chain runs to 146 residues: Hemoglobin subunit beta-1 (146 aa).

The Globin domain occupies 2–146 (EWTDKERAII…VVSALGKQYH (145 aa)). Positions 63 and 92 each coordinate heme b.

This sequence belongs to the globin family. As to quaternary structure, hb 1 is a heterotetramer of two alpha-1 and two beta-1 chains. Red blood cells.

In terms of biological role, involved in oxygen transport from gills to the various peripheral tissues. This chain is Hemoglobin subunit beta-1 (hbb1), found in Gobionotothen gibberifrons (Humped rockcod).